A 284-amino-acid chain; its full sequence is 4-diphosphocytidyl-2-C-methyl-D-erythritol kinase (284 aa).

Lys-14 is an active-site residue. Position 98–108 (98–108 (PMGGGIGGGSS)) interacts with ATP. The active site involves Asp-140.

The protein belongs to the GHMP kinase family. IspE subfamily.

The catalysed reaction is 4-CDP-2-C-methyl-D-erythritol + ATP = 4-CDP-2-C-methyl-D-erythritol 2-phosphate + ADP + H(+). Its pathway is isoprenoid biosynthesis; isopentenyl diphosphate biosynthesis via DXP pathway; isopentenyl diphosphate from 1-deoxy-D-xylulose 5-phosphate: step 3/6. In terms of biological role, catalyzes the phosphorylation of the position 2 hydroxy group of 4-diphosphocytidyl-2C-methyl-D-erythritol. The protein is 4-diphosphocytidyl-2-C-methyl-D-erythritol kinase of Shewanella woodyi (strain ATCC 51908 / MS32).